The sequence spans 927 residues: Isoleucine--tRNA ligase (927 aa).

The 'HIGH' region signature appears at Pro57 to His67. L-isoleucyl-5'-AMP is bound at residue Glu561. The 'KMSKS' region signature appears at Lys602–Ser606. Lys605 lines the ATP pocket. 4 residues coordinate Zn(2+): Cys897, Cys900, Cys917, and Cys920.

The protein belongs to the class-I aminoacyl-tRNA synthetase family. IleS type 1 subfamily. As to quaternary structure, monomer. Zn(2+) is required as a cofactor.

Its subcellular location is the cytoplasm. The catalysed reaction is tRNA(Ile) + L-isoleucine + ATP = L-isoleucyl-tRNA(Ile) + AMP + diphosphate. Its function is as follows. Catalyzes the attachment of isoleucine to tRNA(Ile). As IleRS can inadvertently accommodate and process structurally similar amino acids such as valine, to avoid such errors it has two additional distinct tRNA(Ile)-dependent editing activities. One activity is designated as 'pretransfer' editing and involves the hydrolysis of activated Val-AMP. The other activity is designated 'posttransfer' editing and involves deacylation of mischarged Val-tRNA(Ile). This chain is Isoleucine--tRNA ligase, found in Syntrophotalea carbinolica (strain DSM 2380 / NBRC 103641 / GraBd1) (Pelobacter carbinolicus).